The primary structure comprises 455 residues: Ribulose bisphosphate carboxylase large chain (455 aa).

Lys5 carries the post-translational modification N6,N6,N6-trimethyllysine. Substrate contacts are provided by Asn114 and Thr164. The active-site Proton acceptor is Lys166. Position 168 (Lys168) interacts with substrate. Residues Lys192, Asp194, and Glu195 each contribute to the Mg(2+) site. Lys192 bears the N6-carboxylysine mark. His285 (proton acceptor) is an active-site residue. Substrate contacts are provided by Arg286, His318, and Ser370.

This sequence belongs to the RuBisCO large chain family. Type I subfamily. As to quaternary structure, heterohexadecamer of 8 large chains and 8 small chains; disulfide-linked. The disulfide link is formed within the large subunit homodimers. It depends on Mg(2+) as a cofactor. The disulfide bond which can form in the large chain dimeric partners within the hexadecamer appears to be associated with oxidative stress and protein turnover.

It is found in the plastid. It localises to the chloroplast. It catalyses the reaction 2 (2R)-3-phosphoglycerate + 2 H(+) = D-ribulose 1,5-bisphosphate + CO2 + H2O. It carries out the reaction D-ribulose 1,5-bisphosphate + O2 = 2-phosphoglycolate + (2R)-3-phosphoglycerate + 2 H(+). Functionally, ruBisCO catalyzes two reactions: the carboxylation of D-ribulose 1,5-bisphosphate, the primary event in carbon dioxide fixation, as well as the oxidative fragmentation of the pentose substrate in the photorespiration process. Both reactions occur simultaneously and in competition at the same active site. This chain is Ribulose bisphosphate carboxylase large chain, found in Lupinus nanus (Sky lupine).